The chain runs to 495 residues: Bifunctional protein GlmU (495 aa).

The tract at residues 1-241 is pyrophosphorylase; it reads MTFPGDTAVL…SALVAGVNNR (241 aa). UDP-N-acetyl-alpha-D-glucosamine is bound by residues 12-15, lysine 26, glutamine 83, 88-89, 112-114, glycine 151, glutamate 166, asparagine 181, and asparagine 239; these read LAAG, GT, and SGD. Aspartate 114 is a Mg(2+) binding site. Residue asparagine 239 coordinates Mg(2+). The tract at residues 242-262 is linker; the sequence is VQLAELASELNRRVVAAHQLA. The tract at residues 263 to 495 is N-acetyltransferase; sequence GVTVVDPATT…TQPPDADQTP (233 aa). UDP-N-acetyl-alpha-D-glucosamine contacts are provided by arginine 344 and lysine 362. Residue histidine 374 is the Proton acceptor of the active site. Residues tyrosine 377 and asparagine 388 each contribute to the UDP-N-acetyl-alpha-D-glucosamine site. Acetyl-CoA-binding positions include alanine 391, 397 to 398, serine 416, and alanine 434; that span reads NY. A disordered region spans residues 457–495; the sequence is IENWVQRKRPGSPAAQASKRASEMACQQPTQPPDADQTP. Positions 483–495 are enriched in low complexity; the sequence is QQPTQPPDADQTP.

In the N-terminal section; belongs to the N-acetylglucosamine-1-phosphate uridyltransferase family. This sequence in the C-terminal section; belongs to the transferase hexapeptide repeat family. In terms of assembly, homotrimer. Mg(2+) is required as a cofactor.

Its subcellular location is the cytoplasm. The catalysed reaction is alpha-D-glucosamine 1-phosphate + acetyl-CoA = N-acetyl-alpha-D-glucosamine 1-phosphate + CoA + H(+). The enzyme catalyses N-acetyl-alpha-D-glucosamine 1-phosphate + UTP + H(+) = UDP-N-acetyl-alpha-D-glucosamine + diphosphate. It functions in the pathway nucleotide-sugar biosynthesis; UDP-N-acetyl-alpha-D-glucosamine biosynthesis; N-acetyl-alpha-D-glucosamine 1-phosphate from alpha-D-glucosamine 6-phosphate (route II): step 2/2. Its pathway is nucleotide-sugar biosynthesis; UDP-N-acetyl-alpha-D-glucosamine biosynthesis; UDP-N-acetyl-alpha-D-glucosamine from N-acetyl-alpha-D-glucosamine 1-phosphate: step 1/1. The protein operates within bacterial outer membrane biogenesis; LPS lipid A biosynthesis. In terms of biological role, catalyzes the last two sequential reactions in the de novo biosynthetic pathway for UDP-N-acetylglucosamine (UDP-GlcNAc). The C-terminal domain catalyzes the transfer of acetyl group from acetyl coenzyme A to glucosamine-1-phosphate (GlcN-1-P) to produce N-acetylglucosamine-1-phosphate (GlcNAc-1-P), which is converted into UDP-GlcNAc by the transfer of uridine 5-monophosphate (from uridine 5-triphosphate), a reaction catalyzed by the N-terminal domain. The protein is Bifunctional protein GlmU of Mycobacterium tuberculosis (strain ATCC 25177 / H37Ra).